The sequence spans 269 residues: Cytochrome c oxidase subunit 3 (269 aa).

Residues 1-22 (MTNLIRSNFQDHPFHLVSPSPW) are Mitochondrial matrix-facing. A helical transmembrane segment spans residues 23 to 41 (PLNTSVCLLNLTTTGALSM). Over 42 to 48 (HNFNNIH) the chain is Mitochondrial intermembrane. Residues 49–73 (YLYYIALIGLVSAMFLWFRDIISEG) form a helical membrane-spanning segment. Residues 74–80 (TFLGDHT) are Mitochondrial matrix-facing. The helical transmembrane segment at 81–114 (LAVQRGLNLGIILFIVSEALFFLAIFWAFFHSAL) threads the bilayer. Over 115 to 137 (TPTVELGAQWPPIGIEPVNPFEL) the chain is Mitochondrial intermembrane. A helical membrane pass occupies residues 138-161 (PLLNTVILLSSGATITYAHHALIK). The Mitochondrial matrix portion of the chain corresponds to 162 to 164 (GER). Residues 165 to 188 (EGALYGSIATILLAIIFTGFQGVE) traverse the membrane as a helical segment. Topologically, residues 189 to 201 (YSVSSFTISDGAF) are mitochondrial intermembrane. Residues 202 to 230 (GTCFFFSTGFHGIHVIIGTIFLAVALWRI) traverse the membrane as a helical segment. The Mitochondrial matrix portion of the chain corresponds to 231 to 248 (FAYHLTDNHHVGFEGGIL). The chain crosses the membrane as a helical span at residues 249-265 (YWHFVDVVWLFLYISVY). Residues 266 to 269 (YWGS) lie on the Mitochondrial intermembrane side of the membrane.

It belongs to the cytochrome c oxidase subunit 3 family. Component of the cytochrome c oxidase (complex IV, CIV), a multisubunit enzyme composed of 11 subunits. The complex is composed of a catalytic core of 3 subunits Cox1, Cox2 and Cox3, encoded in the mitochondrial DNA, and 8 supernumerary subunits Cox4, Cox5a/Cox5, Cox6, Cox7, Cox8, Cox7a/Cox9, Cox6b/Cox12 and Cox6a/Cox13, which are encoded in the nuclear genome. The complex exists as a monomer or a dimer and forms respiratory supercomplexes (SCs) in the inner mitochondrial membrane with NADH-ubiquinone oxidoreductase (complex I, CI) and ubiquinol-cytochrome c oxidoreductase (cytochrome b-c1 complex, complex III, CIII), resulting in various different assemblies (supercomplexes I(1)IV(1), I(1)III(3)IV(2), III(2)IV(1) and III(2)IV(2) as well as larger supercomplexes of compositions like I(1)III(2)IV(5-6)).

It is found in the mitochondrion inner membrane. The catalysed reaction is 4 Fe(II)-[cytochrome c] + O2 + 8 H(+)(in) = 4 Fe(III)-[cytochrome c] + 2 H2O + 4 H(+)(out). In terms of biological role, component of the cytochrome c oxidase, the last enzyme in the mitochondrial electron transport chain which drives oxidative phosphorylation. The respiratory chain contains 3 multisubunit complexes succinate dehydrogenase (complex II, CII), ubiquinol-cytochrome c oxidoreductase (cytochrome b-c1 complex, complex III, CIII) and cytochrome c oxidase (complex IV, CIV), that cooperate to transfer electrons derived from NADH and succinate to molecular oxygen, creating an electrochemical gradient over the inner membrane that drives transmembrane transport and the ATP synthase. Cytochrome c oxidase is the component of the respiratory chain that catalyzes the reduction of oxygen to water. Electrons originating from reduced cytochrome c in the intermembrane space (IMS) are transferred via the dinuclear copper A center (CU(A)) of Cox2 and heme A of Cox1 to the active site in Cox1, a binuclear center (BNC) formed by heme A3 and copper B (CU(B)). The BNC reduces molecular oxygen to 2 water molecules using 4 electrons from cytochrome c in the IMS and 4 protons from the mitochondrial matrix. This Neurospora crassa (strain ATCC 24698 / 74-OR23-1A / CBS 708.71 / DSM 1257 / FGSC 987) protein is Cytochrome c oxidase subunit 3 (cox-3).